Reading from the N-terminus, the 438-residue chain is Serine/threonine exchanger SteT (438 aa).

Over 1–11 (MHTEDNGLKKE) the chain is Cytoplasmic. A helical membrane pass occupies residues 12–32 (IGLLFALTLVIGTIIGSGVFM). At 33–45 (KPGAVLAYSGDSK) the chain is on the extracellular side. A helical membrane pass occupies residues 46 to 66 (MALFAWLLGGILTLAGGLTIA). At 67–98 (EIGTQIPKTGGLYTYLEEVYGEFWGFLCGWVQ) the chain is on the cytoplasmic side. Residues 99 to 119 (IIIYGPAIIGALGLYFGSLMA) traverse the membrane as a helical segment. The Extracellular segment spans residues 120–126 (NLFGWGS). A helical membrane pass occupies residues 127–147 (GLSKVIGIIAVLFLCVINIIG). The Cytoplasmic portion of the chain corresponds to 148–151 (TKYG). Residues 152–172 (GFVQTLTTIGKLIPIACIIVF) form a helical membrane-spanning segment. Over 173–193 (GLWKGDQHIFTAVNESISDMN) the chain is Extracellular. The helical transmembrane segment at 194–214 (FGAAILATLFAYDGWILLAAL) threads the bilayer. Residues 215–230 (GGEMKNPEKLLPRAMT) lie on the Cytoplasmic side of the membrane. A helical transmembrane segment spans residues 231 to 251 (GGLLIVTAIYIFINFALLHIL). Residues 252–269 (SANEIVTLGENATSTAAT) are Extracellular-facing. A helical membrane pass occupies residues 270 to 290 (MLFGSIGGKLISVGIIVSIFG). At 291–327 (CLNGKVLSFPRVSFAMAERKQLPFAEKLSHVHPSFRT) the chain is on the cytoplasmic side. Residues 328-348 (PWIAISFQIALALIMMLISNP) form a helical membrane-spanning segment. Residues 349-352 (DKLS) are Extracellular-facing. The chain crosses the membrane as a helical span at residues 353–373 (EISIFMIYIFYVMAFFAVFIL). Residues 374–388 (RKRAKGEKRAYSVPL) are Cytoplasmic-facing. The helical transmembrane segment at 389–409 (YPFMPILAIAGSFFVLGSTLI) threads the bilayer. Residues 410–411 (TD) lie on the Extracellular side of the membrane. The chain crosses the membrane as a helical span at residues 412 to 432 (TMSCGLSILIGLAGLPVYYGM). Over 433–438 (KKRKAS) the chain is Cytoplasmic.

Belongs to the amino acid-polyamine-organocation (APC) superfamily. L-type amino acid transporter (LAT) (TC 2.A.3.8) family. As to quaternary structure, monomer.

It localises to the cell membrane. Its function is as follows. Exhibits an obligate exchange activity for serine, threonine and aromatic amino acids. This is Serine/threonine exchanger SteT (steT) from Bacillus subtilis (strain 168).